We begin with the raw amino-acid sequence, 339 residues long: Very-long-chain 3-oxoacyl-CoA reductase (339 aa).

The helical transmembrane segment at 19–39 (VALFLLSIGGLFTACKLFSFC) threads the bilayer. Residues leucine 64, lysine 105, aspartate 119, aspartate 127, asparagine 146, tyrosine 213, lysine 217, valine 246, and serine 248 each coordinate NADP(+). Catalysis depends on tyrosine 213, which acts as the Proton donor. The active-site Lowers pKa of active site Tyr is lysine 217.

The protein belongs to the short-chain dehydrogenases/reductases (SDR) family.

It is found in the endoplasmic reticulum membrane. The catalysed reaction is a very-long-chain (3R)-3-hydroxyacyl-CoA + NADP(+) = a very-long-chain 3-oxoacyl-CoA + NADPH + H(+). It participates in lipid metabolism; fatty acid biosynthesis. Its function is as follows. Component of the microsomal membrane bound fatty acid elongation system, which produces the 26-carbon very long-chain fatty acids (VLCFA) from palmitate. Catalyzes the reduction of the 3-ketoacyl-CoA intermediate that is formed in each cycle of fatty acid elongation. VLCFAs serve as precursors for ceramide and sphingolipids. The polypeptide is Very-long-chain 3-oxoacyl-CoA reductase (Ajellomyces capsulatus (strain NAm1 / WU24) (Darling's disease fungus)).